The primary structure comprises 274 residues: Pantothenate synthetase (274 aa).

27–34 (MGALHQGH) contacts ATP. Residue histidine 34 is the Proton donor of the active site. Residue glutamine 58 coordinates (R)-pantoate. Glutamine 58 contributes to the beta-alanine binding site. 144–147 (GKKD) contributes to the ATP binding site. Glutamine 150 provides a ligand contact to (R)-pantoate. Residues isoleucine 173 and 181-184 (LSSR) contribute to the ATP site.

The protein belongs to the pantothenate synthetase family. Homodimer.

It is found in the cytoplasm. The catalysed reaction is (R)-pantoate + beta-alanine + ATP = (R)-pantothenate + AMP + diphosphate + H(+). Its pathway is cofactor biosynthesis; (R)-pantothenate biosynthesis; (R)-pantothenate from (R)-pantoate and beta-alanine: step 1/1. Its function is as follows. Catalyzes the condensation of pantoate with beta-alanine in an ATP-dependent reaction via a pantoyl-adenylate intermediate. This chain is Pantothenate synthetase, found in Sulfurovum sp. (strain NBC37-1).